The primary structure comprises 500 residues: Glycerol-3-phosphate acyltransferase 7 (500 aa).

2 helical membrane passes run glycine 38 to leucine 58 and alanine 235 to valine 255. An HXXXXD motif motif is present at residues histidine 298–aspartate 303.

It belongs to the GPAT/DAPAT family. Weakly or not expressed in roots, leaves, seedlings, developing siliques and flower buds.

The protein resides in the membrane. It carries out the reaction sn-glycerol 3-phosphate + an acyl-CoA = a 1-acyl-sn-glycero-3-phosphate + CoA. Its pathway is phospholipid metabolism; CDP-diacylglycerol biosynthesis; CDP-diacylglycerol from sn-glycerol 3-phosphate: step 1/3. Functionally, esterifies acyl-group from acyl-ACP to the sn-1 position of glycerol-3-phosphate, an essential step in glycerolipid biosynthesis. This is Glycerol-3-phosphate acyltransferase 7 (GPAT7) from Arabidopsis thaliana (Mouse-ear cress).